Here is a 37-residue protein sequence, read N- to C-terminus: Cortex morphogenetic protein A (37 aa).

As to quaternary structure, can form a complex with SpoIVA and ClpX.

Its subcellular location is the forespore. Ensures proper spore envelope assembly. Represses premature cortex assembly until coat assembly successfully initiates. Also participates in a quality-control pathway that selectively removes defective sporulating cells through regulated cell death. Acts as an adaptator that delivers SpoIVA to the ClpXP proteolytic machinery for degradation, specifically in cells that improperly assemble the spore envelope. This chain is Cortex morphogenetic protein A, found in Bacillus subtilis (strain 168).